A 148-amino-acid polypeptide reads, in one-letter code: Large ribosomal subunit protein bL9 (148 aa).

Belongs to the bacterial ribosomal protein bL9 family.

Its function is as follows. Binds to the 23S rRNA. The sequence is that of Large ribosomal subunit protein bL9 from Methylococcus capsulatus (strain ATCC 33009 / NCIMB 11132 / Bath).